The chain runs to 126 residues: MASEDVTITVRLIRSFEHRNFRPVVYHGVHLDQTVKDFIVFLKQDIPLRASLPPPFRNYKYDKLKIVHQAHKSKTNELVLSLEDDDRLLLKEDSTLKAAGIASETEIAFFCEEDYKNYKANPISSW.

It belongs to the UPF0538 family.

The sequence is that of UPF0538 protein C2orf76 homolog from Bos taurus (Bovine).